A 1179-amino-acid chain; its full sequence is DNA-directed RNA polymerase subunit beta' (1179 aa).

Positions 60, 62, 75, and 78 each coordinate Zn(2+). Mg(2+) contacts are provided by Asp-449, Asp-451, and Asp-453. Zn(2+)-binding residues include Cys-796, Cys-871, Cys-878, and Cys-881.

The protein belongs to the RNA polymerase beta' chain family. In terms of assembly, the RNAP catalytic core consists of 2 alpha, 1 beta, 1 beta' and 1 omega subunit. When a sigma factor is associated with the core the holoenzyme is formed, which can initiate transcription. The cofactor is Mg(2+). Zn(2+) is required as a cofactor.

It catalyses the reaction RNA(n) + a ribonucleoside 5'-triphosphate = RNA(n+1) + diphosphate. In terms of biological role, DNA-dependent RNA polymerase catalyzes the transcription of DNA into RNA using the four ribonucleoside triphosphates as substrates. The chain is DNA-directed RNA polymerase subunit beta' from Symbiobacterium thermophilum (strain DSM 24528 / JCM 14929 / IAM 14863 / T).